We begin with the raw amino-acid sequence, 461 residues long: Cysteine--tRNA ligase (461 aa).

A Zn(2+)-binding site is contributed by Cys-28. The short motif at 30-40 is the 'HIGH' region element; it reads ITIYDLCHIGH. Residues Cys-209, His-234, and Glu-238 each coordinate Zn(2+). A 'KMSKS' region motif is present at residues 266 to 270; that stretch reads KMSKS. Lys-269 contacts ATP.

It belongs to the class-I aminoacyl-tRNA synthetase family. As to quaternary structure, monomer. Requires Zn(2+) as cofactor.

The protein resides in the cytoplasm. It catalyses the reaction tRNA(Cys) + L-cysteine + ATP = L-cysteinyl-tRNA(Cys) + AMP + diphosphate. The protein is Cysteine--tRNA ligase of Yersinia pseudotuberculosis serotype O:3 (strain YPIII).